The following is a 648-amino-acid chain: Macrolide export ATP-binding/permease protein MacB (648 aa).

The region spanning Leu5–Thr243 is the ABC transporter domain. Gly41–Ser48 lines the ATP pocket. The next 4 membrane-spanning stretches (helical) occupy residues Leu273–Gly293, Leu523–Ile543, Ala576–Phe596, and Pro611–Leu631.

The protein belongs to the ABC transporter superfamily. Macrolide exporter (TC 3.A.1.122) family. Homodimer. Part of the tripartite efflux system MacAB-TolC, which is composed of an inner membrane transporter, MacB, a periplasmic membrane fusion protein, MacA, and an outer membrane component, TolC. The complex forms a large protein conduit and can translocate molecules across both the inner and outer membranes. Interacts with MacA.

It is found in the cell inner membrane. Part of the tripartite efflux system MacAB-TolC. MacB is a non-canonical ABC transporter that contains transmembrane domains (TMD), which form a pore in the inner membrane, and an ATP-binding domain (NBD), which is responsible for energy generation. Confers resistance against macrolides. This Escherichia coli O157:H7 protein is Macrolide export ATP-binding/permease protein MacB.